Here is a 628-residue protein sequence, read N- to C-terminus: Dihydroxy-acid dehydratase (628 aa).

Asp-80 lines the Mg(2+) pocket. A [2Fe-2S] cluster-binding site is contributed by Cys-121. Mg(2+) is bound by residues Asp-122 and Lys-123. Lys-123 is subject to N6-carboxylysine. Cys-207 contributes to the [2Fe-2S] cluster binding site. A Mg(2+)-binding site is contributed by Glu-503. Ser-529 acts as the Proton acceptor in catalysis.

It belongs to the IlvD/Edd family. As to quaternary structure, homodimer. [2Fe-2S] cluster is required as a cofactor. Requires Mg(2+) as cofactor.

The catalysed reaction is (2R)-2,3-dihydroxy-3-methylbutanoate = 3-methyl-2-oxobutanoate + H2O. It carries out the reaction (2R,3R)-2,3-dihydroxy-3-methylpentanoate = (S)-3-methyl-2-oxopentanoate + H2O. It participates in amino-acid biosynthesis; L-isoleucine biosynthesis; L-isoleucine from 2-oxobutanoate: step 3/4. It functions in the pathway amino-acid biosynthesis; L-valine biosynthesis; L-valine from pyruvate: step 3/4. In terms of biological role, functions in the biosynthesis of branched-chain amino acids. Catalyzes the dehydration of (2R,3R)-2,3-dihydroxy-3-methylpentanoate (2,3-dihydroxy-3-methylvalerate) into 2-oxo-3-methylpentanoate (2-oxo-3-methylvalerate) and of (2R)-2,3-dihydroxy-3-methylbutanoate (2,3-dihydroxyisovalerate) into 2-oxo-3-methylbutanoate (2-oxoisovalerate), the penultimate precursor to L-isoleucine and L-valine, respectively. This is Dihydroxy-acid dehydratase from Psychrobacter arcticus (strain DSM 17307 / VKM B-2377 / 273-4).